Consider the following 444-residue polypeptide: MEVKAKQLDSVNATASVKIPSGMIKSEVENLAKKASKSVKMDGFRPGKVPVSAVLKRYERELTQDAEQNLFKSAVNSALQELKKENKELVGEPYFEKFDRKDGEIIAELILSFKPEIKLEGYEKLIPEYQTPKVSKKEIDEKKDELLKRFATPEAIKTKRALKEGDFAKFDFEGFVDDKAFEGGKAENYVLEIGSKQFIPGFEDGMVGMKIGEEKDIKVTFPKEYGAAHLAGKDAVFKVKLHEIQELKIPELDDEMLKKLLPGEEKASVEVLDEKLKEQIKNEKLFKLVNDELKGKFADALIEKYNFDLPKGIVEQETDMQMRAAFNTFSEKEIEELKASKEKYQEKRDSFKEEAQKSVKLTFIIDELAKLRKIEVNDQELIQAIYFEAYRYGMNPKEHLENYKKQGALPAVKMALIEEKLFNDIFIPKTEKSEKVSKKEKEDK.

Positions 165 to 250 constitute a PPIase FKBP-type domain; sequence GDFAKFDFEG…LHEIQELKIP (86 aa).

Belongs to the FKBP-type PPIase family. Tig subfamily.

Its subcellular location is the cytoplasm. It catalyses the reaction [protein]-peptidylproline (omega=180) = [protein]-peptidylproline (omega=0). In terms of biological role, involved in protein export. Acts as a chaperone by maintaining the newly synthesized protein in an open conformation. Functions as a peptidyl-prolyl cis-trans isomerase. The sequence is that of Trigger factor (tig) from Campylobacter jejuni subsp. jejuni serotype O:2 (strain ATCC 700819 / NCTC 11168).